Reading from the N-terminus, the 354-residue chain is UPF0324 membrane protein BL1094 (354 aa).

Helical transmembrane passes span 12-33 (IATVDMLFIGVLTLLASLFASW), 43-65 (FGALIIALLIGMIIQFPIRSAYV), 86-108 (LLRLGIILLGFKLNLAVLFTQGI), 112-129 (PIAAVVVTLTIIVCYAIA), 138-160 (LAILTAGGTGICGAAAVMGLAGS), 175-197 (VTMAVAIVAIMGTVFALLEIALG), 239-256 (LSRVLMLVFAAIIIAIWW), 271-293 (VAFPWFMLGFIGASIIGTFVPFV), 300-321 (LVDFAYIVLGMAMAALGINVNF), and 331-353 (PMLASFLTSILLMCFAAGVAMLF).

This sequence belongs to the UPF0324 family.

It localises to the cell membrane. This chain is UPF0324 membrane protein BL1094, found in Bifidobacterium longum (strain NCC 2705).